The primary structure comprises 147 residues: Ribonuclease H (147 aa).

Mg(2+)-binding residues include Asp8, Glu46, Asp68, and Asp132.

This sequence belongs to the RNase H family. Monomer. Mg(2+) is required as a cofactor.

The protein resides in the cytoplasm. The enzyme catalyses Endonucleolytic cleavage to 5'-phosphomonoester.. Endonuclease that specifically degrades the RNA of RNA-DNA hybrids. In Geotalea uraniireducens (strain Rf4) (Geobacter uraniireducens), this protein is Ribonuclease H.